The following is a 256-amino-acid chain: Tumor necrosis factor receptor superfamily member 9 (256 aa).

A signal peptide spans 1-23; sequence MGNNCYNVVVIVLLLVGCEKVGA. 4 TNFR-Cys repeats span residues 24-45, 46-85, 86-117, and 118-159; these read VQNSCDNCQPGTFCRKYNPVCK, SCPPSTFSSIGGQPNCNICRVCAGYFRFKKFCSSTHNAEC, ECIEGFHCLGPQCTRCEKDCRPGQELTKQGCK, and TCSL…VVCG. Residues 24 to 187 are Extracellular-facing; the sequence is VQNSCDNCQP…GPGGHSLQVL (164 aa). 9 cysteine pairs are disulfide-bonded: Cys28–Cys37, Cys31–Cys44, Cys47–Cys61, Cys64–Cys77, Cys67–Cys85, Cys87–Cys93, Cys98–Cys105, Cys101–Cys116, and Cys119–Cys133. 2 N-linked (GlcNAc...) asparagine glycosylation sites follow: Asn128 and Asn138. Residues Cys139 and Cys158 are joined by a disulfide bond. Residues 188 to 208 traverse the membrane as a helical segment; it reads TLFLALTSALLLALIFITLLF. The Cytoplasmic portion of the chain corresponds to 209–256; it reads SVLKWIRKKFPHIFKQPFKKTTGAAQEEDACSCRCPQEEEGGGGGYEL.

In terms of assembly, predominantly homodimeric, but may also exist as a monomer. Associates with p56-LCK. Interacts with TRAF1, TRAF2 and TRAF3. As to expression, expressed in activated thymocytes, splenic T cells, CD4(+), and CD8(+) T-cells.

Its subcellular location is the cell membrane. Receptor for TNFSF9/4-1BBL. Conveys a signal that enhances CD8(+) T-cell survival, cytotoxicity, and mitochondrial activity, thereby promoting immunity against viruses and tumors. The sequence is that of Tumor necrosis factor receptor superfamily member 9 (Tnfrsf9) from Mus musculus (Mouse).